The following is a 361-amino-acid chain: Alanine racemase (361 aa).

The active-site Proton acceptor; specific for D-alanine is the Lys-34. Lys-34 carries the N6-(pyridoxal phosphate)lysine modification. Arg-129 provides a ligand contact to substrate. The Proton acceptor; specific for L-alanine role is filled by Tyr-254. Residue Met-302 participates in substrate binding.

The protein belongs to the alanine racemase family. Requires pyridoxal 5'-phosphate as cofactor.

The catalysed reaction is L-alanine = D-alanine. It carries out the reaction L-serine = D-serine. The protein operates within amino-acid biosynthesis; D-alanine biosynthesis; D-alanine from L-alanine: step 1/1. Its function is as follows. Catalyzes the interconversion of L-alanine and D-alanine. Likely plays an important role in supplying D-alanine, which is an indispensable constituent in the biosynthesis of bacterial cell-wall peptidoglycan. To a lesser extent, is also able to racemize L-serine and D-serine. Does not act on other proteinogenic amino-acids. This is Alanine racemase (alr1) from Vibrio cholerae serotype O1 (strain ATCC 39315 / El Tor Inaba N16961).